The chain runs to 500 residues: NAD(P)H-quinone oxidoreductase chain 4, chloroplastic (500 aa).

15 helical membrane passes run 4–24 (FPWLTIIVVFPISAGSLMLFL), 35–55 (YTICICILELLLTTYAFCYNF), 87–107 (IGTILLTGFITTLATLAAFPV), 113–130 (LFHFLMLAMYSGQIGSFS), 134–154 (LLLFFIMWELELIPVYLLLAM), 167–187 (FILYTAGSSIFLLIGVLGISL), 211–231 (ILFYIGFLIAFAVKSPIIPLH), 242–262 (HYSTCMLLAGILLKMGAYGLV), 272–292 (AHSMFSPWLMVVGTIQIIYAA), 305–325 (IAYSSVSHMGFIIIGISSITD), 330–350 (GAILQIISHGFIGAALFFLAG), 364–384 (MGGMAISIPKIFTMFTILSMA), 386–406 (LALPGMSGFIAELIVFFGIIT), 411–431 (FLIFKILIIFVMAIGMILTPI), and 462–482 (LFLSISILIPIIGIGIYPDFV).

This sequence belongs to the complex I subunit 4 family.

The protein localises to the plastid. Its subcellular location is the chloroplast thylakoid membrane. It catalyses the reaction a plastoquinone + NADH + (n+1) H(+)(in) = a plastoquinol + NAD(+) + n H(+)(out). It carries out the reaction a plastoquinone + NADPH + (n+1) H(+)(in) = a plastoquinol + NADP(+) + n H(+)(out). The protein is NAD(P)H-quinone oxidoreductase chain 4, chloroplastic of Capsella bursa-pastoris (Shepherd's purse).